The primary structure comprises 100 residues: Co-chaperonin GroES (100 aa).

The protein belongs to the GroES chaperonin family. Heptamer of 7 subunits arranged in a ring. Interacts with the chaperonin GroEL.

It is found in the cytoplasm. Functionally, together with the chaperonin GroEL, plays an essential role in assisting protein folding. The GroEL-GroES system forms a nano-cage that allows encapsulation of the non-native substrate proteins and provides a physical environment optimized to promote and accelerate protein folding. GroES binds to the apical surface of the GroEL ring, thereby capping the opening of the GroEL channel. This Rhodothermus marinus (Rhodothermus obamensis) protein is Co-chaperonin GroES.